The chain runs to 172 residues: MALETCFRAWATLHAPQPPSSGGSRDRLLLSGAGSSQSKPRLSVASPSPLRPASRFACQCSNVVDEVVVADEKNWDSMVLGSEAPVLVEFWAPWCGPCRMIAPVIDELAKEYVGKIKCCKVNTDDSPNIATNYGIRSIPTVLMFKNGEKKESVIGAVPKTTLATIIDKYVSS.

A chloroplast-targeting transit peptide spans 1 to 59 (MALETCFRAWATLHAPQPPSSGGSRDRLLLSGAGSSQSKPRLSVASPSPLRPASRFACQ). The segment at 17 to 47 (QPPSSGGSRDRLLLSGAGSSQSKPRLSVASP) is disordered. The 112-residue stretch at 60–171 (CSNVVDEVVV…LATIIDKYVS (112 aa)) folds into the Thioredoxin domain. Catalysis depends on nucleophile residues C95 and C98. The cysteines at positions 95 and 98 are disulfide-linked.

Belongs to the thioredoxin family. Plant M-type subfamily. In terms of tissue distribution, expressed in leaves and at lower levels in flowers.

Its subcellular location is the plastid. The protein resides in the chloroplast. Thiol-disulfide oxidoreductase probably involved in the redox regulation of chloroplastic enzymes. Required for chloroplast biogenesis and differentiation. Functions as an electron donor for plastidial 2-Cys peroxiredoxins and participates in hydrogen peroxide scavenging system in chloroplasts. Possesses reducing activity towards insulin disulfide bonds. The chain is Thioredoxin M5, chloroplastic (TRXM) from Oryza sativa subsp. japonica (Rice).